The sequence spans 608 residues: MTATTTLKSFNYLSLINHRLNHNSYAILSSPLLPRSHPASTSFSNSGFRFFQSNHLFSSQSGSLMEVFKAAFSEASNSCDRIAIKADGKSYSYGQLTSSALRISKLFLKDDTTNGGQETKKYEGFGSLKGARIGIVAKPSAEFVAGVLGTWFSGGVAVPLALSYPEAELLHVMNDSDISLLLSTEDHSETMKTIAAKSGARFHLIPPVVNSTSETVACNQFQDDSFEAEGKFLDDPALIVYTSGTTGKPKGVVHTHNSINSQVRMLTEAWEYTSADHFLHCLPLHHVHGLFNALFAPLYARSLVEFLPKFSVSGIWRRWRESYPVNDEKTNDSITVFTGVPTMYTRLIQGYEAMDKEMQDSSAFAARKLRLMMSGSSALPRPVMHQWESITGHRLLERYGMTEFVMAMSNPLRGARNAGTVGKPLPGVEAKIKEDENDANGVGEICVKSPSLFKEYWNLPEVTKESFTEDGYFKTGDAGRVDEDGYYVILGRNSADIMKVGGYKLSALEIESTLLEHPTVAECCVLGLTDNDYGEAVTAIIIAESAAKKRREDESKPVITLEELCGWAKDKLAPYKLPTRLLIWESLPRNAMGKVNKKELKKSLENQE.

This sequence belongs to the ATP-dependent AMP-binding enzyme family. In terms of tissue distribution, expressed in flowers.

It localises to the cytoplasm. It is found in the nucleus. The enzyme catalyses malonate + ATP + CoA = malonyl-CoA + AMP + diphosphate. Functionally, malonate--CoA ligase that catalyzes the formation of malonyl-CoA directly from malonate and CoA. May be required for the detoxification of malonate. In Arabidopsis thaliana (Mouse-ear cress), this protein is Malonate--CoA ligase (AAE13).